The chain runs to 864 residues: Leucine--tRNA ligase (864 aa).

The 'HIGH' region motif lies at 42–52 (PYPSGKLHMGH). Residues 624 to 628 (KMSKS) carry the 'KMSKS' region motif. Lys627 is an ATP binding site.

The protein belongs to the class-I aminoacyl-tRNA synthetase family.

The protein localises to the cytoplasm. It catalyses the reaction tRNA(Leu) + L-leucine + ATP = L-leucyl-tRNA(Leu) + AMP + diphosphate. The protein is Leucine--tRNA ligase of Burkholderia pseudomallei (strain 1106a).